Here is a 356-residue protein sequence, read N- to C-terminus: NADH dehydrogenase (ubiquinone) complex I, assembly factor 6 homolog (356 aa).

Residues Met1–Thr41 constitute a mitochondrion transit peptide.

The protein belongs to the NDUFAF6 family.

It is found in the mitochondrion inner membrane. Involved in the assembly of mitochondrial NADH:ubiquinone oxidoreductase complex (complex I) at early stages. This chain is NADH dehydrogenase (ubiquinone) complex I, assembly factor 6 homolog, found in Dictyostelium discoideum (Social amoeba).